The chain runs to 350 residues: tRNA uridine(34) hydroxylase (350 aa).

A Rhodanese domain is found at 146 to 240 (DDPDALFIDM…YARKAREQGL (95 aa)). Catalysis depends on Cys200, which acts as the Cysteine persulfide intermediate.

This sequence belongs to the TrhO family.

It carries out the reaction uridine(34) in tRNA + AH2 + O2 = 5-hydroxyuridine(34) in tRNA + A + H2O. Catalyzes oxygen-dependent 5-hydroxyuridine (ho5U) modification at position 34 in tRNAs, the first step in 5-carboxymethoxyuridine (cmo5U) biosynthesis. May be part of an alternate pathway, which is able to bypass cmo5U biogenesis in a subset of tRNAs under aerobic conditions. This is tRNA uridine(34) hydroxylase from Escherichia coli O17:K52:H18 (strain UMN026 / ExPEC).